The chain runs to 209 residues: uncharacterized protein (209 aa).

4 consecutive transmembrane segments (helical) span residues 21–41 (LAYL…VFGL), 81–101 (ILGL…RIAA), 107–127 (VLVN…LYVF), and 159–179 (AAGA…LLFF).

Its subcellular location is the cell membrane. This is an uncharacterized protein from Bacillus subtilis (strain 168).